The following is a 142-amino-acid chain: Large ribosomal subunit protein uL13 (142 aa).

This sequence belongs to the universal ribosomal protein uL13 family. In terms of assembly, part of the 50S ribosomal subunit.

This protein is one of the early assembly proteins of the 50S ribosomal subunit, although it is not seen to bind rRNA by itself. It is important during the early stages of 50S assembly. The protein is Large ribosomal subunit protein uL13 of Shewanella oneidensis (strain ATCC 700550 / JCM 31522 / CIP 106686 / LMG 19005 / NCIMB 14063 / MR-1).